The following is a 278-amino-acid chain: Acyl-[acyl-carrier-protein]--UDP-N-acetylglucosamine O-acyltransferase (278 aa).

This sequence belongs to the transferase hexapeptide repeat family. LpxA subfamily. Homotrimer.

It localises to the cytoplasm. The catalysed reaction is a (3R)-hydroxyacyl-[ACP] + UDP-N-acetyl-alpha-D-glucosamine = a UDP-3-O-[(3R)-3-hydroxyacyl]-N-acetyl-alpha-D-glucosamine + holo-[ACP]. It participates in glycolipid biosynthesis; lipid IV(A) biosynthesis; lipid IV(A) from (3R)-3-hydroxytetradecanoyl-[acyl-carrier-protein] and UDP-N-acetyl-alpha-D-glucosamine: step 1/6. Its function is as follows. Involved in the biosynthesis of lipid A, a phosphorylated glycolipid that anchors the lipopolysaccharide to the outer membrane of the cell. The sequence is that of Acyl-[acyl-carrier-protein]--UDP-N-acetylglucosamine O-acyltransferase from Brucella abortus (strain S19).